Here is a 72-residue protein sequence, read N- to C-terminus: Alpha-elapitoxin-Djk2a (72 aa).

Disulfide bonds link C3/C21, C14/C42, C27/C31, C46/C57, and C58/C63.

The protein belongs to the three-finger toxin family. Long-chain subfamily. Type II alpha-neurotoxin sub-subfamily. Expressed by the venom gland.

It is found in the secreted. Its function is as follows. Binds with high affinity to muscular (alpha-1/CHRNA1) and neuronal (alpha-7/CHRNA7) nicotinic acetylcholine receptor (nAChR) and inhibits acetylcholine from binding to the receptor, thereby impairing neuromuscular and neuronal transmission. The chain is Alpha-elapitoxin-Djk2a from Dendroaspis jamesoni kaimosae (Eastern Jameson's mamba).